The sequence spans 67 residues: Large ribosomal subunit protein bL35 (67 aa).

It belongs to the bacterial ribosomal protein bL35 family.

This Mesorhizobium japonicum (strain LMG 29417 / CECT 9101 / MAFF 303099) (Mesorhizobium loti (strain MAFF 303099)) protein is Large ribosomal subunit protein bL35.